A 240-amino-acid polypeptide reads, in one-letter code: Transmembrane protein 65 (240 aa).

The N-terminal 61 residues, 1 to 61 (MSRLLPLLRS…RRLGTHPKKE (61 aa)), are a transit peptide targeting the mitochondrion. The Cytoplasmic portion of the chain corresponds to 62-110 (PMEALNTAQGARDFIYSLHSTERSCLLKELHRFESIAIAQEKLEAPPPT). Residues 111–131 (PGQLRYVFIHNAIPFIGFGFL) form a helical membrane-spanning segment. The Extracellular segment spans residues 132-142 (DNAIMIVAGTH). The helical transmembrane segment at 143-165 (IEMSIGIILGISTMAAAALGNLV) threads the bilayer. The Cytoplasmic portion of the chain corresponds to 166–209 (SDLAGLGLAGYVEALASRLGLSIPDLTPKQVDMWQTRLSTHLGK). Residues 210–230 (AVGVTIGCILGMFPLIFFGGG) form a helical membrane-spanning segment. Residues 231 to 240 (EEDEKLETKS) are Extracellular-facing.

In terms of assembly, monomer. Homodimer. Interacts with GJA1. Interacts weakly with DSP. Interacts with SCN1B. In terms of tissue distribution, predominantly expressed the ventricular tissue (at protein level).

It is found in the cell membrane. It localises to the mitochondrion inner membrane. In terms of biological role, essential for maintaining proper cardiac intercalated disk (ICD) structure and function as well as cardiac conduction velocity in the heart. Its association with SCN1B is required for stabilizing the perinexus in the ICD and for localization of GJA1 and SCN5A to the ICD. May regulate the function of the gap junction protein GJA1 and may contribute to the stability and proper localization of GJA1 to cardiac intercalated disk thereby regulating gap junction communication. May also play a role in the regulation of mitochondrial respiration and mitochondrial DNA copy number maintenance. This is Transmembrane protein 65 (TMEM65) from Homo sapiens (Human).